Reading from the N-terminus, the 674-residue chain is L-type lectin-domain containing receptor kinase IV.3 (674 aa).

Residues 1-22 (MFFKLFTIFFFFIILLSKPLNS) form the signal peptide. Residues Asn21, Asn28, Asn40, Asn81, Asn136, and Asn188 are each glycosylated (N-linked (GlcNAc...) asparagine). The Extracellular portion of the chain corresponds to 23-296 (SSQSLNFTYN…TSLQRFYKNR (274 aa)). Positions 26–263 (SLNFTYNSFH…SEHFVFGWSF (238 aa)) are legume-lectin like. Residues 297 to 317 (MPLFSLLLIPVLFVVSLIFLV) form a helical membrane-spanning segment. Residues 318-674 (RFIVRRRRKF…IAYSIVSGGR (357 aa)) lie on the Cytoplasmic side of the membrane. The Protein kinase domain occupies 355 to 632 (FKDKDLLGSG…LQYLRGDATL (278 aa)). ATP is bound by residues 361 to 369 (LGSGGFGRV) and Lys384. Asp480 (proton acceptor) is an active-site residue.

The protein in the C-terminal section; belongs to the protein kinase superfamily. Ser/Thr protein kinase family. This sequence in the N-terminal section; belongs to the leguminous lectin family.

It localises to the cell membrane. It catalyses the reaction L-seryl-[protein] + ATP = O-phospho-L-seryl-[protein] + ADP + H(+). The enzyme catalyses L-threonyl-[protein] + ATP = O-phospho-L-threonyl-[protein] + ADP + H(+). The protein is L-type lectin-domain containing receptor kinase IV.3 (LECRK43) of Arabidopsis thaliana (Mouse-ear cress).